Reading from the N-terminus, the 348-residue chain is Protein-glutamate methylesterase/protein-glutamine glutaminase 2 (348 aa).

The Response regulatory domain maps to Lys5 to Glu122. Residue Asp56 is modified to 4-aspartylphosphate. The region spanning Ser157–Lys348 is the CheB-type methylesterase domain. Residues Ser169, His195, and Asp291 contribute to the active site.

It belongs to the CheB family. Phosphorylated by CheA. Phosphorylation of the N-terminal regulatory domain activates the methylesterase activity.

It localises to the cytoplasm. The catalysed reaction is [protein]-L-glutamate 5-O-methyl ester + H2O = L-glutamyl-[protein] + methanol + H(+). It catalyses the reaction L-glutaminyl-[protein] + H2O = L-glutamyl-[protein] + NH4(+). Its function is as follows. Involved in chemotaxis. Part of a chemotaxis signal transduction system that modulates chemotaxis in response to various stimuli. Catalyzes the demethylation of specific methylglutamate residues introduced into the chemoreceptors (methyl-accepting chemotaxis proteins or MCP) by CheR. Also mediates the irreversible deamidation of specific glutamine residues to glutamic acid. In Saccharophagus degradans (strain 2-40 / ATCC 43961 / DSM 17024), this protein is Protein-glutamate methylesterase/protein-glutamine glutaminase 2.